A 373-amino-acid chain; its full sequence is Arabinonate dehydratase (373 aa).

Mg(2+) contacts are provided by D199, E225, and E251.

The protein belongs to the mandelate racemase/muconate lactonizing enzyme family. Homooctamer. Mg(2+) is required as a cofactor.

It catalyses the reaction D-arabinonate = 2-dehydro-3-deoxy-D-arabinonate + H2O. Its activity is regulated as follows. Inhibited by substrate levels above 8 mM. Its function is as follows. Catalyzes the dehydration of D-arabinonate to 2-keto-3-deoxy-D-arabinonate. Participates in a pentose oxidation pathway that converts D-arabinonate to 2-oxoglutarate. This chain is Arabinonate dehydratase, found in Saccharolobus solfataricus (strain ATCC 35092 / DSM 1617 / JCM 11322 / P2) (Sulfolobus solfataricus).